The primary structure comprises 588 residues: Glutamate--tRNA ligase (588 aa).

Positions 112-122 (PNPDFYLHLGS) match the 'HIGH' region motif.

The protein belongs to the class-I aminoacyl-tRNA synthetase family. Glutamate--tRNA ligase type 2 subfamily.

Its subcellular location is the cytoplasm. It catalyses the reaction tRNA(Glu) + L-glutamate + ATP = L-glutamyl-tRNA(Glu) + AMP + diphosphate. Its function is as follows. Catalyzes the attachment of glutamate to tRNA(Glu) in a two-step reaction: glutamate is first activated by ATP to form Glu-AMP and then transferred to the acceptor end of tRNA(Glu). This chain is Glutamate--tRNA ligase, found in Caldivirga maquilingensis (strain ATCC 700844 / DSM 13496 / JCM 10307 / IC-167).